A 210-amino-acid chain; its full sequence is Helix-loop-helix protein 26 (210 aa).

A compositionally biased stretch (low complexity) spans 1 to 15 (MSSSPTSSSSGSPSS). A disordered region spans residues 1-33 (MSSSPTSSSSGSPSSHGHRSETEKQRRDDTNDL). Residues 14-65 (SSHGHRSETEKQRRDDTNDLLNEFKKIVQKSESEKLSKEEVLFRIVKLLSGI) enclose the bHLH domain. Residues 18 to 33 (HRSETEKQRRDDTNDL) show a composition bias toward basic and acidic residues.

As to quaternary structure, homodimer; binds to DNA as a homodimer. As to expression, expressed in intestinal cells (at protein level).

It localises to the nucleus. As a homodimer binds DNA via the E-box sequence 5'-CACGTG-3'. Represses lag-2 transcription during embryogenesis via Notch signaling, in an unc-37-dependent manner. Also represses tbx-37 independent of Notch signaling. In the intestine, plays a role in probiotic-mediated protection against infections by pathogens such as S.enterica. This is most likely by positively regulating the expression of genes such as bar-1 upon exposure to probiotic bacteria such as the E.faecium. This Caenorhabditis elegans protein is Helix-loop-helix protein 26.